The primary structure comprises 103 residues: Histone H4 (103 aa).

Over residues 1–14 (MSGRGKGGKGLGKG) the composition is skewed to gly residues. The tract at residues 1-20 (MSGRGKGGKGLGKGGAKRHR) is disordered. Residue S2 is modified to N-acetylserine. K17 is subject to N6-acetyllysine. The DNA-binding element occupies 17–21 (KRHRK). K21 is modified (N6-methyllysine).

Belongs to the histone H4 family. In terms of assembly, the nucleosome is a histone octamer containing two molecules each of H2A, H2B, H3 and H4 assembled in one H3-H4 heterotetramer and two H2A-H2B heterodimers. The octamer wraps approximately 147 bp of DNA.

Its subcellular location is the nucleus. The protein resides in the chromosome. Functionally, core component of nucleosome. Nucleosomes wrap and compact DNA into chromatin, limiting DNA accessibility to the cellular machineries which require DNA as a template. Histones thereby play a central role in transcription regulation, DNA repair, DNA replication and chromosomal stability. DNA accessibility is regulated via a complex set of post-translational modifications of histones, also called histone code, and nucleosome remodeling. This Capsicum annuum (Capsicum pepper) protein is Histone H4.